Consider the following 211-residue polypeptide: Pyridoxine/pyridoxamine 5'-phosphate oxidase (211 aa).

Substrate is bound by residues 7 to 10 (RRDY) and lysine 65. Residues 60–65 (RIVLLK), 75–76 (YT), arginine 81, lysine 82, and glutamine 104 each bind FMN. 3 residues coordinate substrate: tyrosine 122, arginine 126, and serine 130. FMN-binding positions include 139-140 (QS) and tryptophan 184. 190 to 192 (RLH) lines the substrate pocket. Arginine 194 contributes to the FMN binding site.

This sequence belongs to the pyridoxamine 5'-phosphate oxidase family. As to quaternary structure, homodimer. It depends on FMN as a cofactor.

The enzyme catalyses pyridoxamine 5'-phosphate + O2 + H2O = pyridoxal 5'-phosphate + H2O2 + NH4(+). It carries out the reaction pyridoxine 5'-phosphate + O2 = pyridoxal 5'-phosphate + H2O2. It participates in cofactor metabolism; pyridoxal 5'-phosphate salvage; pyridoxal 5'-phosphate from pyridoxamine 5'-phosphate: step 1/1. Its pathway is cofactor metabolism; pyridoxal 5'-phosphate salvage; pyridoxal 5'-phosphate from pyridoxine 5'-phosphate: step 1/1. In terms of biological role, catalyzes the oxidation of either pyridoxine 5'-phosphate (PNP) or pyridoxamine 5'-phosphate (PMP) into pyridoxal 5'-phosphate (PLP). This is Pyridoxine/pyridoxamine 5'-phosphate oxidase from Aliivibrio salmonicida (strain LFI1238) (Vibrio salmonicida (strain LFI1238)).